A 149-amino-acid polypeptide reads, in one-letter code: UPAR/Ly6 domain-containing protein bou (149 aa).

Residues 1-31 (MWPPKHAHIGWLSSLALVVLLMSLQMVMVSG) form the signal peptide. The Extracellular segment spans residues 32-126 (IECYVCDTSD…YTCDTDGCNA (95 aa)). 5 cysteine pairs are disulfide-bonded: cysteine 34–cysteine 74, cysteine 37–cysteine 48, cysteine 65–cysteine 91, cysteine 100–cysteine 115, and cysteine 119–cysteine 124. The N-linked (GlcNAc...) asparagine glycan is linked to asparagine 64. The GPI-anchor amidated asparagine moiety is linked to residue asparagine 125. The propeptide at 126 to 149 (AAGRLELEWGVAAALLTLTWLLRH) is removed in mature form. Residues 127–147 (AGRLELEWGVAAALLTLTWLL) form a helical membrane-spanning segment. The Cytoplasmic segment spans residues 148 to 149 (RH).

Post-translationally, GPI-anchored.

It localises to the cell membrane. The protein resides in the cell junction. It is found in the septate junction. Its subcellular location is the cytoplasm. The protein localises to the cell cortex. It localises to the secreted. The protein resides in the apicolateral cell membrane. Its function is as follows. Involved in tracheal paracellular barrier functions mediated by epithelial cell septate junctions. Involved in paracellular barrier functions mediated by glial cell septate junctions in the peripheral nervous system, including the chordotonal organs, but not the hemolymph-brain barrier (the insect blood-brain barrier) of the central nervous system. Required for septate junction assembly, possibly by organizing the preassembly and transport of septate junction proteins such as dlg1/disks large 1, Nrx-IV/Neurexin-IV and the claudin protein kune. Involved in chitin fiber organization during tracheal development. Secreted, possibly in association with extracellular vesicles, to act non-autonomously on tissues distant from its site of expression. The sequence is that of UPAR/Ly6 domain-containing protein bou from Drosophila melanogaster (Fruit fly).